The sequence spans 133 residues: DNA-directed RNA polymerases I and III subunit RPAC2 (133 aa).

Residue methionine 1 is modified to N-acetylmethionine.

It belongs to the archaeal Rpo11/eukaryotic RPB11/RPC19 RNA polymerase subunit family. In terms of assembly, component of the RNA polymerase I and RNA polymerase III complexes consisting of at least 13 and 17 subunits, respectively. Pol I complex consists of a ten-subunit catalytic core composed of POLR1A/RPA1, POLR1B/RPA2, POLR1C/RPAC1, POLR1D/RPAC2, POLR1H/RPA12, POLR2E/RPABC1, POLR2F/RPABC2, POLR2H/RPABC3, POLR2K/RPABC4 and POLR2L/RPABC5; a mobile stalk subunit POLR1F/RPA43 protruding from the core and additional subunits homologous to general transcription factors POLR1E/RPA49 and POLR1G/RPA34. Part of Pol I pre-initiation complex (PIC), in which Pol I core assembles with RRN3 and promoter-bound UTBF and SL1/TIF-IB complex. Pol III complex consists of a ten-subunit catalytic core composed of POLR3A/RPC1, POLR3B/RPC2, POLR1C/RPAC1, POLR1D/RPAC2, POLR3K/RPC10, POLR2E/RPABC1, POLR2F/RPABC2, POLR2H/RPABC3, POLR2K/RPABC4 and POLR2L/RPABC5; a mobile stalk composed of two subunits POLR3H/RPC8 and CRCP/RPC9, protruding from the core and functioning primarily in transcription initiation; and additional subunits homologous to general transcription factors of the RNA polymerase II machinery, POLR3C/RPC3-POLR3F/RPC6-POLR3G/RPC7 heterotrimer required for transcription initiation and POLR3D/RPC4-POLR3E/RPC5 heterodimer involved in both transcription initiation and termination.

The protein localises to the nucleus. Its subcellular location is the nucleolus. Its function is as follows. DNA-dependent RNA polymerase catalyzes the transcription of DNA into RNA using the four ribonucleoside triphosphates as substrates. Common component of RNA polymerases I and III which synthesize ribosomal RNA precursors and short non-coding RNAs including 5S rRNA, snRNAs, tRNAs and miRNAs, respectively. In Homo sapiens (Human), this protein is DNA-directed RNA polymerases I and III subunit RPAC2.